Here is a 372-residue protein sequence, read N- to C-terminus: High-affinity lysophosphatidic acid receptor (372 aa).

Over 1–38 the chain is Extracellular; the sequence is MGCNNTALDNCMLPNLSIATAPLDLRFAFSTPLRMLLA. Residues Asn4 and Asn15 are each glycosylated (N-linked (GlcNAc...) asparagine). Residues 39 to 59 traverse the membrane as a helical segment; sequence IIMILMIAIAFLGNAIVCLIV. The Cytoplasmic portion of the chain corresponds to 60-80; that stretch reads YQKPAMRSAINLLLATLAFSD. The helical transmembrane segment at 81–101 threads the bilayer; it reads IMLSLFCMPFTAVTIITGSWL. Over 102 to 108 the chain is Extracellular; that stretch reads FGTQFCQ. A helical transmembrane segment spans residues 109–129; the sequence is ISAMLYWFFVLEGVAILLIIS. Topologically, residues 130–149 are cytoplasmic; it reads VDRFLIIVQRQDKLNPHRAK. The helical transmembrane segment at 150–170 threads the bilayer; it reads IMIAASWVLSFCISLPSVVGW. Over 171–198 the chain is Extracellular; sequence TLVEVPTRAPQCVLGYTEFSADRVYAVM. The helical transmembrane segment at 199-219 threads the bilayer; it reads LIVAVFFIPFSVMLYSYLCIL. The Cytoplasmic portion of the chain corresponds to 220 to 268; the sequence is NTVRRNAVRIHTHADSLCLSQVSKLGLMGLQRPHQMNVDMSFKTRAFTT. Residues 269 to 289 traverse the membrane as a helical segment; that stretch reads ILILFIGFSLCWLPHSVFSLL. Residues 290-301 are Extracellular-facing; that stretch reads SVFSRTFYYSSS. Residues 302 to 324 form a helical membrane-spanning segment; it reads FYSISTCTLWLTYLKSVFNPVIY. Residues 325-372 lie on the Cytoplasmic side of the membrane; sequence CWRIKKFREACLEFMPKTFKILPNVRGRTRRRIRPSTIYVCGEHQSAV.

This sequence belongs to the G-protein coupled receptor 1 family. In terms of tissue distribution, ubiquitously expressed.

The protein resides in the cell membrane. Functionally, highly selective receptor for lysophosphatidic acid (LPA), a mediator of diverse cellular activities. The chain is High-affinity lysophosphatidic acid receptor from Xenopus laevis (African clawed frog).